The chain runs to 365 residues: MISTTSKRKIEHLKLCAESPVESRKVSAGFEDVTLIHRALPELDMDKLNLSIDFLGKRLQAPFLIASITGGHPDTTPVNAALAAAAEELGIGMGVGSQRAAIDDPTQEESFRVVREKAPTAFIYGNVGAAQIRQYGVDGVEKLIEMIDADALAIHLNFLQEAIQPEGDRDATGCLDMIKEICSVLGKPVIIKETGAGISREDSILLQKAGVSAIDVGGAGGTSWAGVEVYRARKSGDYASEHLGELFWDFGIPTVASIIESRVSLPIIATGGIRTGIDIAKSIALGASAASAALPFVGPALEGKESVVRVLSRMLDEFRIAMFLCGCANIQDLRNAPVVVTGWTLEYLGQRGFNVKDYAIAGDSF.

Position 8-9 (8-9) interacts with substrate; it reads RK. FMN contacts are provided by residues 67–69, S97, and N126; that span reads SIT. 97–99 serves as a coordination point for substrate; the sequence is SQR. Residue Q160 coordinates substrate. E161 is a binding site for Mg(2+). FMN-binding positions include K192, T222, 272 to 274, and 293 to 294; these read GIR and AL.

It belongs to the IPP isomerase type 2 family. In terms of assembly, homooctamer. Dimer of tetramers. Requires FMN as cofactor. NADPH serves as cofactor. Mg(2+) is required as a cofactor.

The protein resides in the cytoplasm. The enzyme catalyses isopentenyl diphosphate = dimethylallyl diphosphate. In terms of biological role, involved in the biosynthesis of isoprenoids. Catalyzes the 1,3-allylic rearrangement of the homoallylic substrate isopentenyl (IPP) to its allylic isomer, dimethylallyl diphosphate (DMAPP). This chain is Isopentenyl-diphosphate delta-isomerase, found in Methanosarcina barkeri (strain Fusaro / DSM 804).